A 402-amino-acid polypeptide reads, in one-letter code: Enoyl-[acyl-carrier-protein] reductase [NADH] (402 aa).

Residues 48–53 (GASSGY), 74–75 (FE), 111–112 (DA), and 140–141 (LA) each bind NAD(+). Y226 is a substrate binding site. Y236 functions as the Proton donor in the catalytic mechanism. NAD(+) is bound by residues K245 and 274-276 (VVT).

It belongs to the TER reductase family. In terms of assembly, monomer.

It carries out the reaction a 2,3-saturated acyl-[ACP] + NAD(+) = a (2E)-enoyl-[ACP] + NADH + H(+). It functions in the pathway lipid metabolism; fatty acid biosynthesis. In terms of biological role, involved in the final reduction of the elongation cycle of fatty acid synthesis (FAS II). Catalyzes the reduction of a carbon-carbon double bond in an enoyl moiety that is covalently linked to an acyl carrier protein (ACP). This Xanthomonas campestris pv. campestris (strain 8004) protein is Enoyl-[acyl-carrier-protein] reductase [NADH].